Here is a 591-residue protein sequence, read N- to C-terminus: Polyphenol oxidase D, chloroplastic (591 aa).

The transit peptide at 1-83 directs the protein to the chloroplast; it reads MASLCSNSST…ANAIPLAASA (83 aa). Cystine bridges form between cysteine 94-cysteine 110 and cysteine 109-cysteine 177. Cu cation is bound by residues histidine 176, histidine 194, histidine 203, histidine 324, histidine 328, and histidine 366. A cross-link (2'-(S-cysteinyl)-histidine (Cys-His)) is located at residues 180–194; that stretch reads CNGAYRIGGKELQVH.

This sequence belongs to the tyrosinase family. Cu(2+) is required as a cofactor.

It localises to the plastid. It is found in the chloroplast thylakoid lumen. The catalysed reaction is 2 catechol + O2 = 2 1,2-benzoquinone + 2 H2O. Its function is as follows. Catalyzes the oxidation of mono- and o-diphenols to o-diquinones. This is Polyphenol oxidase D, chloroplastic from Solanum lycopersicum (Tomato).